Consider the following 114-residue polypeptide: MRGNSVDLQEIVLVQQGEVPENAAVHSGEHSDDEGESEEEEREQVQQVPTPRRTLYLVESQCPFCQAIIRFVCVASNTGIRNLQALLVNSHLDLACHACVEQNGVQGLRHRQWQ.

The E7 terminal domain stretch occupies residues 1–43 (MRGNSVDLQEIVLVQQGEVPENAAVHSGEHSDDEGESEEEERE). The segment at 17–49 (GEVPENAAVHSGEHSDDEGESEEEEREQVQQVP) is disordered. A compositionally biased stretch (acidic residues) spans 31 to 42 (SDDEGESEEEER). A zinc finger spans residues 62–99 (CPFCQAIIRFVCVASNTGIRNLQALLVNSHLDLACHAC). Residues 80–88 (IRNLQALLV) carry the Nuclear export signal motif.

It belongs to the papillomaviridae E7 protein family. Homodimer. Homooligomer. Interacts with host RB1; this interaction induces dissociation of RB1-E2F1 complex thereby disrupting RB1 activity. Interacts with host EP300; this interaction represses EP300 transcriptional activity. Interacts with protein E2; this interaction inhibits E7 oncogenic activity. Interacts with host TMEM173/STING; this interaction impairs the ability of TMEM173/STING to sense cytosolic DNA and promote the production of type I interferon (IFN-alpha and IFN-beta). Highly phosphorylated.

Its subcellular location is the host cytoplasm. It localises to the host nucleus. Functionally, plays a role in viral genome replication by driving entry of quiescent cells into the cell cycle. Stimulation of progression from G1 to S phase allows the virus to efficiently use the cellular DNA replicating machinery to achieve viral genome replication. E7 protein has both transforming and trans-activating activities. Induces the disassembly of the E2F1 transcription factor from RB1, with subsequent transcriptional activation of E2F1-regulated S-phase genes. Interferes with host histone deacetylation mediated by HDAC1 and HDAC2, leading to transcription activation. Also plays a role in the inhibition of both antiviral and antiproliferative functions of host interferon alpha. Interaction with host TMEM173/STING impairs the ability of TMEM173/STING to sense cytosolic DNA and promote the production of type I interferon (IFN-alpha and IFN-beta). In Human papillomavirus type 41, this protein is Protein E7.